The primary structure comprises 246 residues: tRNA (guanine-N(1)-)-methyltransferase (246 aa).

Residues Gly-112 and 131 to 136 (IGDYVL) contribute to the S-adenosyl-L-methionine site.

Belongs to the RNA methyltransferase TrmD family. Homodimer.

Its subcellular location is the cytoplasm. It catalyses the reaction guanosine(37) in tRNA + S-adenosyl-L-methionine = N(1)-methylguanosine(37) in tRNA + S-adenosyl-L-homocysteine + H(+). In terms of biological role, specifically methylates guanosine-37 in various tRNAs. The sequence is that of tRNA (guanine-N(1)-)-methyltransferase from Thermosipho africanus (strain TCF52B).